Here is a 474-residue protein sequence, read N- to C-terminus: Nucleobindin-1 (474 aa).

An N-terminal signal peptide occupies residues 1 to 24 (MPPSGPRAALFLLPSLLLLRAVLA). Serine 83 is modified (phosphoserine). The residue at position 145 (threonine 145) is a Phosphothreonine. Residues 147–215 (EARDLELLIQ…QQRRHREHPK (69 aa)) are a coiled coil. Residues 190-207 (SLGEEQRKEAERKLEEQQ) are compositionally biased toward basic and acidic residues. The disordered stretch occupies residues 190–218 (SLGEEQRKEAERKLEEQQRRHREHPKVNV). The binds to GNAI2 and GNAI3 stretch occupies residues 225–318 (LKEVWEELDG…VTLEEFLAST (94 aa)). 2 consecutive EF-hand domains span residues 237–272 (PNRF…ELEK) and 289–324 (ERLR…KEFG). Ca(2+)-binding residues include aspartate 250, asparagine 252, aspartate 254, glutamate 261, aspartate 302, asparagine 304, aspartate 306, and glutamate 313. The GBA motif lies at 300-330 (NVDTNQDRLVTLEEFLASTQRKEFGDTGEGW). Residues 355 to 422 (AYTEEELRRF…RKQQQQSHNN (68 aa)) adopt a coiled-coil conformation. Residues 382-474 (LSQETEALGR…EPPQLDSQHL (93 aa)) are disordered. Serine 383 carries the phosphoserine modification. Positions 448–460 (DQKDVDASEKKVP) are enriched in basic and acidic residues. Serine 471 carries the phosphoserine modification.

Belongs to the nucleobindin family. As to quaternary structure, interacts (via GBA motif) with guanine nucleotide-binding protein G(i) alpha subunits GNAI1, GNAI2 and GNAI3 with higher affinity for GNAI1 and GNAI3 than for GNAI2. Preferentially interacts with inactive rather than active GNAI3. Interaction with GNAI3 is inhibited when NUCB1 binds calcium, probably due to a conformational change which renders the GBA motif inaccessible. Expressed in bone where it is detected in the soft tissue in the center of the osteon and in the osteocyte lacuna (at protein level).

The protein resides in the golgi apparatus. It is found in the cis-Golgi network membrane. It localises to the cytoplasm. The protein localises to the secreted. In terms of biological role, major calcium-binding protein of the Golgi which may have a role in calcium homeostasis. Acts as a non-receptor guanine nucleotide exchange factor which binds to and activates alpha subunits of guanine nucleotide-binding proteins (G proteins). The protein is Nucleobindin-1 (NUCB1) of Bos taurus (Bovine).